A 308-amino-acid chain; its full sequence is Ribosomal RNA small subunit methyltransferase H (308 aa).

Residues Gly36–His38, Asp55, Phe82, Asp103, and Gln110 each bind S-adenosyl-L-methionine.

The protein belongs to the methyltransferase superfamily. RsmH family.

The protein localises to the cytoplasm. It carries out the reaction cytidine(1402) in 16S rRNA + S-adenosyl-L-methionine = N(4)-methylcytidine(1402) in 16S rRNA + S-adenosyl-L-homocysteine + H(+). Its function is as follows. Specifically methylates the N4 position of cytidine in position 1402 (C1402) of 16S rRNA. In Helicobacter pylori (strain ATCC 700392 / 26695) (Campylobacter pylori), this protein is Ribosomal RNA small subunit methyltransferase H.